The chain runs to 195 residues: Interferon tau-6 (195 aa).

An N-terminal signal peptide occupies residues 1 to 23 (MAFVLSLLMALVLVSYGPGGSLG). 2 cysteine pairs are disulfide-bonded: Cys-24/Cys-122 and Cys-52/Cys-162. Asn-101 carries N-linked (GlcNAc...) asparagine glycosylation.

Belongs to the alpha/beta interferon family. IFN-alphaII subfamily. As to expression, constitutively and exclusively expressed in the mononuclear cells of the extraembryonic trophectoderm.

It localises to the secreted. In terms of biological role, paracrine hormone primarily responsible for maternal recognition of pregnancy. Interacts with endometrial receptors, probably type I interferon receptors, and blocks estrogen receptor expression, preventing the estrogen-induced increase in oxytocin receptor expression in the endometrium. This results in the suppression of the pulsatile endometrial release of the luteolytic hormone prostaglandin F2-alpha, hindering the regression of the corpus luteum (luteolysis) and therefore a return to ovarian cyclicity. This, and a possible direct effect of IFN-tau on prostaglandin synthesis, leads in turn to continued ovarian progesterone secretion, which stimulates the secretion by the endometrium of the nutrients required for the growth of the conceptus. In summary, displays particularly high antiviral and antiproliferative potency concurrently with particular weak cytotoxicity, high antiluteolytic activity and immunomodulatory properties. In contrast with other IFNs, IFN-tau is not virally inducible. The polypeptide is Interferon tau-6 (IFNT6) (Ovis aries (Sheep)).